The sequence spans 228 residues: Triosephosphate isomerase (228 aa).

Residue 11–13 (NFK) participates in substrate binding. The Electrophile role is filled by H95. The Proton acceptor role is filled by E143. Substrate contacts are provided by residues I148, G183, and 204-205 (AS).

It belongs to the triosephosphate isomerase family. Homotetramer; dimer of dimers.

The protein localises to the cytoplasm. The enzyme catalyses D-glyceraldehyde 3-phosphate = dihydroxyacetone phosphate. It participates in carbohydrate biosynthesis; gluconeogenesis. The protein operates within carbohydrate degradation; glycolysis; D-glyceraldehyde 3-phosphate from glycerone phosphate: step 1/1. Involved in the gluconeogenesis. Catalyzes stereospecifically the conversion of dihydroxyacetone phosphate (DHAP) to D-glyceraldehyde-3-phosphate (G3P). In Pyrococcus horikoshii (strain ATCC 700860 / DSM 12428 / JCM 9974 / NBRC 100139 / OT-3), this protein is Triosephosphate isomerase.